Here is a 53-residue protein sequence, read N- to C-terminus: uncharacterized protein (53 aa).

The chain crosses the membrane as a helical span at residues 26–46 (CYLLFCFLECFLNLFKKCGVF).

This sequence belongs to the plectrovirus ORF11 family.

It is found in the host membrane. This is an uncharacterized protein from Spiroplasma virus SpV1-R8A2 B (SpV1).